We begin with the raw amino-acid sequence, 355 residues long: Uroporphyrinogen decarboxylase (355 aa).

Residues 23-27 (RQAGR), aspartate 72, tyrosine 148, serine 203, and histidine 321 each bind substrate.

It belongs to the uroporphyrinogen decarboxylase family. In terms of assembly, homodimer.

The protein localises to the cytoplasm. It catalyses the reaction uroporphyrinogen III + 4 H(+) = coproporphyrinogen III + 4 CO2. It functions in the pathway porphyrin-containing compound metabolism; protoporphyrin-IX biosynthesis; coproporphyrinogen-III from 5-aminolevulinate: step 4/4. Catalyzes the decarboxylation of four acetate groups of uroporphyrinogen-III to yield coproporphyrinogen-III. The chain is Uroporphyrinogen decarboxylase from Chloroflexus aurantiacus (strain ATCC 29366 / DSM 635 / J-10-fl).